The sequence spans 211 residues: NADH-quinone oxidoreductase subunit I 1 (211 aa).

4Fe-4S ferredoxin-type domains lie at 50–80 (LNRH…VEGA) and 96–125 (RVYQ…MTNE). [4Fe-4S] cluster-binding residues include Cys-60, Cys-63, Cys-66, Cys-70, Cys-105, Cys-108, Cys-111, and Cys-115. The disordered stretch occupies residues 192-211 (QEGDSTFGATEPASEEVIRR).

It belongs to the complex I 23 kDa subunit family. NDH-1 is composed of 14 different subunits. Subunits NuoA, H, J, K, L, M, N constitute the membrane sector of the complex. [4Fe-4S] cluster serves as cofactor.

The protein localises to the cell membrane. The catalysed reaction is a quinone + NADH + 5 H(+)(in) = a quinol + NAD(+) + 4 H(+)(out). Functionally, NDH-1 shuttles electrons from NADH, via FMN and iron-sulfur (Fe-S) centers, to quinones in the respiratory chain. The immediate electron acceptor for the enzyme in this species is believed to be ubiquinone. Couples the redox reaction to proton translocation (for every two electrons transferred, four hydrogen ions are translocated across the cytoplasmic membrane), and thus conserves the redox energy in a proton gradient. The chain is NADH-quinone oxidoreductase subunit I 1 from Streptomyces coelicolor (strain ATCC BAA-471 / A3(2) / M145).